The primary structure comprises 367 residues: Deoxyhypusine synthase-like protein (367 aa).

The tract at residues 1–23 is disordered; the sequence is MKSLFQRRASKVRETEAMNAPVP.

Belongs to the deoxyhypusine synthase family.

The chain is Deoxyhypusine synthase-like protein from Caulobacter vibrioides (strain ATCC 19089 / CIP 103742 / CB 15) (Caulobacter crescentus).